We begin with the raw amino-acid sequence, 178 residues long: Large ribosomal subunit protein bL17 (178 aa).

2 stretches are compositionally biased toward low complexity: residues lysine 123–threonine 139 and glutamate 151–alanine 160. The tract at residues lysine 123 to alanine 178 is disordered. The segment covering aspartate 161–alanine 178 has biased composition (basic and acidic residues).

Belongs to the bacterial ribosomal protein bL17 family. In terms of assembly, part of the 50S ribosomal subunit. Contacts protein L32.

This Cutibacterium acnes (strain DSM 16379 / KPA171202) (Propionibacterium acnes) protein is Large ribosomal subunit protein bL17.